The following is a 188-amino-acid chain: dCTP deaminase (188 aa).

Residues 111–116 (KSTYAR), 135–137 (TLE), glutamine 156, tyrosine 170, lysine 179, and glutamine 180 each bind dCTP. Residue glutamate 137 is the Proton donor/acceptor of the active site.

This sequence belongs to the dCTP deaminase family. In terms of assembly, homotrimer.

The catalysed reaction is dCTP + H2O + H(+) = dUTP + NH4(+). It functions in the pathway pyrimidine metabolism; dUMP biosynthesis; dUMP from dCTP (dUTP route): step 1/2. Functionally, catalyzes the deamination of dCTP to dUTP. The sequence is that of dCTP deaminase from Orientia tsutsugamushi (strain Ikeda) (Rickettsia tsutsugamushi).